Here is a 308-residue protein sequence, read N- to C-terminus: Protein doublecortin (308 aa).

The Doublecortin 1 domain maps to Ala-21–Pro-104. Positions Glu-115–Pro-167 are disordered. Positions Pro-141 to Pro-167 are enriched in low complexity. The Doublecortin 2 domain occupies Lys-194–Ser-277. Residues Glu-282–Phe-308 form a disordered region. Over residues Glu-291–Gln-300 the composition is skewed to low complexity.

Interacts with lis1.

Its subcellular location is the cytoplasm. The protein resides in the cytoskeleton. In terms of biological role, has a cytoskeleton-independent function in chemotactic signaling during development. The chain is Protein doublecortin (dcx) from Dictyostelium discoideum (Social amoeba).